The chain runs to 227 residues: Phosphoribosylformylglycinamidine synthase subunit PurQ (227 aa).

One can recognise a Glutamine amidotransferase type-1 domain in the interval 3 to 225 (FAVIVFPGSN…LKQWRETYVV (223 aa)). The active-site Nucleophile is C86. Catalysis depends on residues H194 and E196.

In terms of assembly, part of the FGAM synthase complex composed of 1 PurL, 1 PurQ and 2 PurS subunits.

It localises to the cytoplasm. It carries out the reaction N(2)-formyl-N(1)-(5-phospho-beta-D-ribosyl)glycinamide + L-glutamine + ATP + H2O = 2-formamido-N(1)-(5-O-phospho-beta-D-ribosyl)acetamidine + L-glutamate + ADP + phosphate + H(+). The enzyme catalyses L-glutamine + H2O = L-glutamate + NH4(+). It functions in the pathway purine metabolism; IMP biosynthesis via de novo pathway; 5-amino-1-(5-phospho-D-ribosyl)imidazole from N(2)-formyl-N(1)-(5-phospho-D-ribosyl)glycinamide: step 1/2. Functionally, part of the phosphoribosylformylglycinamidine synthase complex involved in the purines biosynthetic pathway. Catalyzes the ATP-dependent conversion of formylglycinamide ribonucleotide (FGAR) and glutamine to yield formylglycinamidine ribonucleotide (FGAM) and glutamate. The FGAM synthase complex is composed of three subunits. PurQ produces an ammonia molecule by converting glutamine to glutamate. PurL transfers the ammonia molecule to FGAR to form FGAM in an ATP-dependent manner. PurS interacts with PurQ and PurL and is thought to assist in the transfer of the ammonia molecule from PurQ to PurL. This is Phosphoribosylformylglycinamidine synthase subunit PurQ from Bacillus thuringiensis (strain Al Hakam).